The sequence spans 126 residues: Holo-[acyl-carrier-protein] synthase (126 aa).

Mg(2+)-binding residues include Asp9 and Glu58.

It belongs to the P-Pant transferase superfamily. AcpS family. Mg(2+) serves as cofactor.

The protein localises to the cytoplasm. It carries out the reaction apo-[ACP] + CoA = holo-[ACP] + adenosine 3',5'-bisphosphate + H(+). Its function is as follows. Transfers the 4'-phosphopantetheine moiety from coenzyme A to a Ser of acyl-carrier-protein. This is Holo-[acyl-carrier-protein] synthase from Salmonella paratyphi B (strain ATCC BAA-1250 / SPB7).